The sequence spans 390 residues: Formate-dependent phosphoribosylglycinamide formyltransferase (390 aa).

N(1)-(5-phospho-beta-D-ribosyl)glycinamide-binding positions include 14-15 (EL) and Glu74. ATP-binding positions include Arg106, Lys147, 152–157 (SSGKGQ), 187–190 (EQFI), and Glu195. Residues 111-304 (DLAAQELGIT…EFDLHARAIM (194 aa)) form the ATP-grasp domain. Residues Glu263 and Glu275 each contribute to the Mg(2+) site. N(1)-(5-phospho-beta-D-ribosyl)glycinamide-binding positions include Asp282, Lys351, and 358-359 (RR).

This sequence belongs to the PurK/PurT family. Homodimer.

The catalysed reaction is N(1)-(5-phospho-beta-D-ribosyl)glycinamide + formate + ATP = N(2)-formyl-N(1)-(5-phospho-beta-D-ribosyl)glycinamide + ADP + phosphate + H(+). It participates in purine metabolism; IMP biosynthesis via de novo pathway; N(2)-formyl-N(1)-(5-phospho-D-ribosyl)glycinamide from N(1)-(5-phospho-D-ribosyl)glycinamide (formate route): step 1/1. Its function is as follows. Involved in the de novo purine biosynthesis. Catalyzes the transfer of formate to 5-phospho-ribosyl-glycinamide (GAR), producing 5-phospho-ribosyl-N-formylglycinamide (FGAR). Formate is provided by PurU via hydrolysis of 10-formyl-tetrahydrofolate. In Erythrobacter litoralis (strain HTCC2594), this protein is Formate-dependent phosphoribosylglycinamide formyltransferase.